The following is a 383-amino-acid chain: Acyl-CoA dehydrogenase, short-chain specific (383 aa).

Residue Glu-367 is the Proton acceptor of the active site.

The protein belongs to the acyl-CoA dehydrogenase family. In terms of assembly, homotetramer. FAD is required as a cofactor.

The enzyme catalyses butanoyl-CoA + oxidized [electron-transfer flavoprotein] + H(+) = (2E)-butenoyl-CoA + reduced [electron-transfer flavoprotein]. The catalysed reaction is a short-chain 2,3-saturated fatty acyl-CoA + oxidized [electron-transfer flavoprotein] + H(+) = a short-chain (2E)-enoyl-CoA + reduced [electron-transfer flavoprotein]. Functionally, has an optimum specificity for 4-carbon length fatty acyl-CoAs. This chain is Acyl-CoA dehydrogenase, short-chain specific, found in Megasphaera elsdenii.